We begin with the raw amino-acid sequence, 233 residues long: Lipoprotein-releasing system ATP-binding protein LolD (233 aa).

Residues 6 to 233 (LQCDNLCKRY…TAELSLMGAE (228 aa)) enclose the ABC transporter domain. Position 42–49 (42–49 (GSSGSGKS)) interacts with ATP.

This sequence belongs to the ABC transporter superfamily. Lipoprotein translocase (TC 3.A.1.125) family. The complex is composed of two ATP-binding proteins (LolD) and two transmembrane proteins (LolC and LolE).

It localises to the cell inner membrane. In terms of biological role, part of the ABC transporter complex LolCDE involved in the translocation of mature outer membrane-directed lipoproteins, from the inner membrane to the periplasmic chaperone, LolA. Responsible for the formation of the LolA-lipoprotein complex in an ATP-dependent manner. The sequence is that of Lipoprotein-releasing system ATP-binding protein LolD from Salmonella paratyphi A (strain ATCC 9150 / SARB42).